The following is a 375-amino-acid chain: GTAGKVIKCKAAIAWEIKKPLSIEQIEVAPPKAHEVRIKILATGICRSDDHVISGAFKMPLPMVLGHEAAGVVESVGEGVTCVKPGDKVIPLFVPQCGKCSSCRSTRGNLCTSNDLSAATGLMPDGTSRFTCKGKSLHHFISTSSFTEYTVVHENSVVKIDAAAPLEKVCLIGCGFSTGYGAAVETAKVEPGSTCAVFGLGGVGLSAVMGCKAAGASRIIGVDINKDKFPKAKEMGATECVNPLDYKKPINEVLFDLTGGEGVDYSFEVIGRTDTMTAALASCHMDYGTSIIVGLPPSASEITFSPGLIFTGRTWKGSVFGGWKSKDSVPRLVSDFMQKKFSLDPLITHTMPFDKINEGFELLRAGKSIRSVLLF.

Residue G1 is modified to N-acetylglycine. C46, H67, C97, C100, C103, C111, and C174 together coordinate Zn(2+). NAD(+) contacts are provided by residues 199–204, D223, K228, 293–295, and R370; these read GLGGVG and VGL.

The protein belongs to the zinc-containing alcohol dehydrogenase family. Class-I subfamily. Multimeric (with different ratios of monomers). Requires Zn(2+) as cofactor.

Its subcellular location is the cytoplasm. The catalysed reaction is a primary alcohol + NAD(+) = an aldehyde + NADH + H(+). It carries out the reaction a secondary alcohol + NAD(+) = a ketone + NADH + H(+). In Saara hardwickii (Indian spiny-tailed lizard), this protein is Alcohol dehydrogenase 1A.